Reading from the N-terminus, the 330-residue chain is Putative [LysW]-L-2-aminoadipate/[LysW]-L-glutamate phosphate reductase (330 aa).

Position 10-13 (10-13 (SGYI)) interacts with NADP(+). The active site involves C142. N297 provides a ligand contact to NADP(+).

It belongs to the NAGSA dehydrogenase family. Type 1 subfamily. LysY sub-subfamily.

The protein resides in the cytoplasm. The catalysed reaction is [amino-group carrier protein]-C-terminal-N-(1-carboxy-5-oxopentan-1-yl)-L-glutamine + phosphate + NADP(+) = [amino-group carrier protein]-C-terminal-N-(1-carboxy-5-phosphooxy-5-oxopentan-1-yl)-L-glutamine + NADPH + H(+). It catalyses the reaction [amino-group carrier protein]-C-terminal-gamma-(L-glutamyl-5-semialdehyde)-L-glutamate + phosphate + NADP(+) = [amino-group carrier protein]-C-terminal-gamma-(5-phospho-L-glutamyl)-L-glutamate + NADPH + H(+). Its pathway is amino-acid biosynthesis; L-lysine biosynthesis via AAA pathway; L-lysine from L-alpha-aminoadipate (Thermus route): step 3/5. It functions in the pathway amino-acid biosynthesis; L-arginine biosynthesis. Its function is as follows. Involved in both the arginine and lysine biosynthetic pathways. The polypeptide is Putative [LysW]-L-2-aminoadipate/[LysW]-L-glutamate phosphate reductase (Pyrococcus furiosus (strain ATCC 43587 / DSM 3638 / JCM 8422 / Vc1)).